The sequence spans 306 residues: Ribonuclease Z (306 aa).

The Zn(2+) site is built by His63, His65, Asp67, His68, His141, Asp208, and His266. The active-site Proton acceptor is the Asp67.

It belongs to the RNase Z family. Homodimer. It depends on Zn(2+) as a cofactor.

The enzyme catalyses Endonucleolytic cleavage of RNA, removing extra 3' nucleotides from tRNA precursor, generating 3' termini of tRNAs. A 3'-hydroxy group is left at the tRNA terminus and a 5'-phosphoryl group is left at the trailer molecule.. Its function is as follows. Zinc phosphodiesterase, which displays some tRNA 3'-processing endonuclease activity. Probably involved in tRNA maturation, by removing a 3'-trailer from precursor tRNA. This is Ribonuclease Z from Protochlamydia amoebophila (strain UWE25).